Here is a 671-residue protein sequence, read N- to C-terminus: Oviduct-specific glycoprotein (671 aa).

Positions 1 to 21 (MGRLLLWVGLVLLMKPNDGTA) are cleaved as a signal peptide. The region spanning 22–385 (YKLVCYFTNW…HILNELLVRA (364 aa)) is the GH18 domain. Cysteines 26 and 51 form a disulfide. Residues 71 to 72 (LQ), 98 to 101 (GGWN), Tyr-142, 211 to 214 (LSYD), and Trp-355 each bind chitin. Asn-402 carries an N-linked (GlcNAc...) asparagine glycan. 8 repeat units span residues 490-504 (TGMTVTVQTQTAGRE), 505-519 (TMTTVGNQSVTPGGE), 520-534 (TMTTVGNQSVTPGGE), 535-549 (TVTTVGNQSVTPGGE), 550-564 (TMTTVGNQSVTPGGE), 565-579 (TVTIVGNKSVTPVGE), 580-594 (TVTIVGNKSVTPGGQ), and 595-609 (TTATVGSQSVTPPGM). An 8 X 15 AA tandem repeats region spans residues 490–609 (TGMTVTVQTQ…GSQSVTPPGM (120 aa)). Residues Asn-511, Asn-526, Asn-541, Asn-556, Asn-571, and Asn-586 are each glycosylated (N-linked (GlcNAc...) asparagine).

It belongs to the glycosyl hydrolase 18 family. Post-translationally, highly O-glycosylated and also N-glycosylated. Oviduct.

The protein localises to the cytoplasmic vesicle. Its subcellular location is the secretory vesicle. In terms of biological role, binds to oocyte zona pellucida in vivo. May play a role in the fertilization process and/or early embryonic development. Might act as a protective secretion influencing the first steps of the reproductive process necessary for the normal triggering of fertilization and early embryonic development. In Mesocricetus auratus (Golden hamster), this protein is Oviduct-specific glycoprotein (OVGP1).